The following is a 242-amino-acid chain: ATP-dependent dethiobiotin synthetase BioD (242 aa).

12–17 (EVGKTV) lines the ATP pocket. T16 contributes to the Mg(2+) binding site. K37 is an active-site residue. S41 is a substrate binding site. ATP is bound by residues D51 and 112–115 (EGAG). Mg(2+) contacts are provided by D51 and E112.

Belongs to the dethiobiotin synthetase family. Homodimer. It depends on Mg(2+) as a cofactor.

The protein localises to the cytoplasm. It catalyses the reaction (7R,8S)-7,8-diammoniononanoate + CO2 + ATP = (4R,5S)-dethiobiotin + ADP + phosphate + 3 H(+). It participates in cofactor biosynthesis; biotin biosynthesis; biotin from 7,8-diaminononanoate: step 1/2. In terms of biological role, catalyzes a mechanistically unusual reaction, the ATP-dependent insertion of CO2 between the N7 and N8 nitrogen atoms of 7,8-diaminopelargonic acid (DAPA, also called 7,8-diammoniononanoate) to form a ureido ring. This chain is ATP-dependent dethiobiotin synthetase BioD, found in Bacillus cereus (strain B4264).